Reading from the N-terminus, the 340-residue chain is N-acetyl-gamma-glutamyl-phosphate reductase (340 aa).

Residue C149 is part of the active site.

Belongs to the NAGSA dehydrogenase family. Type 1 subfamily.

Its subcellular location is the cytoplasm. The enzyme catalyses N-acetyl-L-glutamate 5-semialdehyde + phosphate + NADP(+) = N-acetyl-L-glutamyl 5-phosphate + NADPH + H(+). It participates in amino-acid biosynthesis; L-arginine biosynthesis; N(2)-acetyl-L-ornithine from L-glutamate: step 3/4. In terms of biological role, catalyzes the NADPH-dependent reduction of N-acetyl-5-glutamyl phosphate to yield N-acetyl-L-glutamate 5-semialdehyde. In Ruthia magnifica subsp. Calyptogena magnifica, this protein is N-acetyl-gamma-glutamyl-phosphate reductase.